The chain runs to 300 residues: MNLILELLLLVGIIIYSYLESLVKFFIPQRRKSVAGQTVLITGAGHGIGRLTAYEFAKQKSRLVLWDISKHGVEETAAKCRKLGAVVHVFVVDCSNRAEIYKSVDQVKKEVGDIEIVVNNAGAIYPADLLSTKDEEITKTFEVNILGHFWIIKALLPSMLRRNSGHIVTVASVCGHRVIPYLIPYCSSKFAAVGFHRALTAELDTLGKTGIKTSCLCPVFVNTGFTKNPSTRLWPVLEPDEVARSLIDGILTNKKMIFVPSYINISLIVEMFFPERVLKAINRIQNIQFEAIVGHRTKRK.

Positions 1-19 are cleaved as a signal peptide; sequence MNLILELLLLVGIIIYSYL. Phosphoserine is present on Ser33. 40–67 contributes to the NAD(+) binding site; that stretch reads LITGAGHGIGRLTAYEFAKQKSRLVLWD. Position 69 is a phosphoserine (Ser69). Lys79 is modified (N6-acetyllysine). Ser172 contacts substrate. Tyr185 functions as the Proton acceptor in the catalytic mechanism. Lys189 lines the NAD(+) pocket.

This sequence belongs to the short-chain dehydrogenases/reductases (SDR) family.

It is found in the lipid droplet. The protein localises to the endoplasmic reticulum. It carries out the reaction 17beta-estradiol + NAD(+) = estrone + NADH + H(+). The enzyme catalyses all-trans-retinol + NAD(+) = all-trans-retinal + NADH + H(+). The catalysed reaction is all-trans-retinal + NAD(+) + H2O = all-trans-retinoate + NADH + 2 H(+). In terms of biological role, plays a pivotal role in hepatic lipid metabolism. In vitro, it catalyzes the oxidation of a variety of lipid substrates, including 17beta-estradiol, retinol, retinal, and leukotriene B4. The polypeptide is 17-beta-hydroxysteroid dehydrogenase 13 (Hsd17b13) (Rattus norvegicus (Rat)).